The chain runs to 261 residues: Proliferating cell nuclear antigen (261 aa).

An N6-acetyllysine mark is found at K14, K77, and K80. Residues 61 to 80 (RCDRNLAMGVNLTSMSKILK) mediate DNA binding. Residues C135 and C162 are joined by a disulfide bond. A Glycyl lysine isopeptide (Lys-Gly) (interchain with G-Cter in SUMO2); alternate cross-link involves residue K164. Residue K164 forms a Glycyl lysine isopeptide (Lys-Gly) (interchain with G-Cter in ubiquitin); alternate linkage. Phosphotyrosine; by EGFR is present on Y211. K248 bears the N6-acetyllysine mark. A Glycyl lysine isopeptide (Lys-Gly) (interchain with G-Cter in SUMO2) cross-link involves residue K254.

It belongs to the PCNA family. In terms of assembly, homotrimer. Interacts with p300/EP300; the interaction occurs on chromatin in UV-irradiated damaged cells. Interacts with CREBBP (via transactivation domain and C-terminus); the interaction occurs on chromatin in UV-irradiated damaged cells. Directly interacts with POLD1, POLD3 and POLD4 subunits of the DNA polymerase delta complex, POLD3 being the major interacting partner; the interaction with POLD3 is inhibited by CDKN1A/p21(CIP1). Forms a complex with activator 1 heteropentamer in the presence of ATP. Interacts with EXO1, POLH, POLK, DNMT1, ERCC5, FEN1, CDC6 and POLDIP2. Interacts with POLB. Interacts with APEX2; this interaction is triggered by reactive oxygen species and increased by misincorporation of uracil in nuclear DNA. Forms a ternary complex with DNTTIP2 and core histone. Interacts with KCTD10. Interacts with PPP1R15A. Interacts with SMARCA5/SNF2H. Interacts with BAZ1B/WSTF; the interaction is direct and is required for BAZ1B/WSTF binding to replication foci during S phase. Interacts with HLTF and SHPRH. Interacts with NUDT15; this interaction is disrupted in response to UV irradiation and acetylation. Interacts with CDKN1A/p21(CIP1) and CDT1; interacts via their PIP-box which also recruits the DCX(DTL) complex. The interaction with CDKN1A inhibits POLD3 binding. Interacts with DDX11. Interacts with EGFR; positively regulates PCNA. Interacts with PARPBP. Interacts (when ubiquitinated) with SPRTN; leading to enhance RAD18-mediated PCNA ubiquitination. Interacts (when polyubiquitinated) with ZRANB3. Interacts with SMARCAD1. Interacts with CDKN1C. Interacts with PCLAF (via PIP-box). Interacts with RTEL1 (via PIP-box); the interaction is direct and essential for the suppression of telomere fragility. Interacts with FAM111A (via PIP-box); the interaction is direct and required for PCNA loading on chromatin binding. Interacts with LIG1. Interacts with SETMAR. Interacts with ANKRD17. Interacts with FBXO18/FBH1 (via PIP-box); the interaction recruits the DCX(DTL) complex and promotes ubiquitination and degradation of FBXO18/FBH1. Interacts with POLN. Interacts with SDE2 (via PIP-box); the interaction is direct and prevents ultraviolet light induced monoubiquitination. Component of the replisome complex composed of at least DONSON, MCM2, MCM7, PCNA and TICRR; interaction at least with PCNA occurs during DNA replication. Interacts with MAPK15; the interaction is chromatin binding dependent and prevents MDM2-mediated PCNA destruction by inhibiting the association of PCNA with MDM2. Interacts with PARP10 (via PIP-box). Interacts with DDI2. Interacts with HMCES (via PIP-box). Interacts with TRAIP (via PIP-box). Interacts with UHRF2. Interacts with ALKBH2; this interaction is enhanced during the S-phase of the cell cycle. Interacts with ATAD5; the interaction promotes USP1-mediated PCNA deubiquitination. Interacts (when phosphorylated) with GRB2. Interacts with ANG. Interacts with nuclear UNG; this interaction mediates UNG recruitment to S-phase replication foci. Interacts with ERCC6L2 (via an atypical PIP-box); this interaction facilitates cenrtomeric localization of ERCC6L2. In terms of processing, phosphorylated. Phosphorylation at Tyr-211 by EGFR stabilizes chromatin-associated PCNA. Acetylated by CREBBP and p300/EP300; preferentially acetylated by CREBBP on Lys-80, Lys-13 and Lys-14 and on Lys-77 by p300/EP300 upon loading on chromatin in response to UV irradiation. Lysine acetylation disrupts association with chromatin, hence promoting PCNA ubiquitination and proteasomal degradation in response to UV damage in a CREBBP- and EP300-dependent manner. Acetylation disrupts interaction with NUDT15 and promotes degradation. Post-translationally, ubiquitinated. Following DNA damage, can be either monoubiquitinated to stimulate direct bypass of DNA lesions by specialized DNA polymerases or polyubiquitinated to promote recombination-dependent DNA synthesis across DNA lesions by template switching mechanisms. Following induction of replication stress, monoubiquitinated by the UBE2B-RAD18 complex on Lys-164, leading to recruit translesion (TLS) polymerases, which are able to synthesize across DNA lesions in a potentially error-prone manner. An error-free pathway also exists and requires non-canonical polyubiquitination on Lys-164 through 'Lys-63' linkage of ubiquitin moieties by the E2 complex UBE2N-UBE2V2 and the E3 ligases, HLTF, RNF8 and SHPRH. This error-free pathway, also known as template switching, employs recombination mechanisms to synthesize across the lesion, using as a template the undamaged, newly synthesized strand of the sister chromatid. Monoubiquitination at Lys-164 also takes place in undamaged proliferating cells, and is mediated by the DCX(DTL) complex, leading to enhance PCNA-dependent translesion DNA synthesis. Sumoylated during S phase. In terms of processing, methylated on glutamate residues by ARMT1.

The protein resides in the nucleus. Its function is as follows. Auxiliary protein of DNA polymerase delta and epsilon, is involved in the control of eukaryotic DNA replication by increasing the polymerase's processibility during elongation of the leading strand. Induces a robust stimulatory effect on the 3'-5' exonuclease and 3'-phosphodiesterase, but not apurinic-apyrimidinic (AP) endonuclease, APEX2 activities. Has to be loaded onto DNA in order to be able to stimulate APEX2. Plays a key role in DNA damage response (DDR) by being conveniently positioned at the replication fork to coordinate DNA replication with DNA repair and DNA damage tolerance pathways. Acts as a loading platform to recruit DDR proteins that allow completion of DNA replication after DNA damage and promote postreplication repair: Monoubiquitinated PCNA leads to recruitment of translesion (TLS) polymerases, while 'Lys-63'-linked polyubiquitination of PCNA is involved in error-free pathway and employs recombination mechanisms to synthesize across the lesion. The chain is Proliferating cell nuclear antigen (Pcna) from Mus musculus (Mouse).